The sequence spans 340 residues: UDP-3-O-(3-hydroxymyristoyl)glucosamine N-acyltransferase (340 aa).

The active-site Proton acceptor is His239.

This sequence belongs to the transferase hexapeptide repeat family. LpxD subfamily. As to quaternary structure, homotrimer.

The enzyme catalyses a UDP-3-O-[(3R)-3-hydroxyacyl]-alpha-D-glucosamine + a (3R)-hydroxyacyl-[ACP] = a UDP-2-N,3-O-bis[(3R)-3-hydroxyacyl]-alpha-D-glucosamine + holo-[ACP] + H(+). The catalysed reaction is UDP-3-O-[(3R)-3-hydroxytetradecanoyl]-alpha-D-glucosamine + (3R)-hydroxytetradecanoyl-[ACP] = UDP-2-N,3-O-bis[(3R)-3-hydroxytetradecanoyl]-alpha-D-glucosamine + holo-[ACP] + H(+). It participates in glycolipid biosynthesis; lipid IV(A) biosynthesis; lipid IV(A) from (3R)-3-hydroxytetradecanoyl-[acyl-carrier-protein] and UDP-N-acetyl-alpha-D-glucosamine: step 3/6. Its function is as follows. Catalyzes the N-acylation of UDP-3-O-(hydroxytetradecanoyl)glucosamine using 3-hydroxytetradecanoyl-ACP as the acyl donor. Is involved in the biosynthesis of lipid A, a phosphorylated glycolipid that anchors the lipopolysaccharide to the outer membrane of the cell. This Yersinia enterocolitica protein is UDP-3-O-(3-hydroxymyristoyl)glucosamine N-acyltransferase.